The primary structure comprises 356 residues: MKFLDEAKVYVRSGDGGNGCVAFRREKFIEFGGPNGGNGGRGGDVVIEAVDGLNTLIDYRYQQHFKAQKGENGMGKDRHGAGGKSIVLKVPVGTQIFDEDRETLIHDFTAVGERFVLAEGGNGGFGNAHFKSPTNRAPRHANPGQPGEERWIWLRMKLIADAGLVGLPNAGKSTFLSKVSAAKPKIADYPFTTLHPQLGVVNADGREFVLADIPGLIEGAHEGAGLGDRFLGHVERCRVLLHLVDATCEHAGKAYKTVRHELEAYGGDLTDKIEIVALNKIDAVDPDELKKQRDRLKRAAKKTPILISGATGEGVKEALRKLADVVGEQPVSSKAKNAVESAATEEPWAAPVPPQG.

The 159-residue stretch at 1–159 (MKFLDEAKVY…RWIWLRMKLI (159 aa)) folds into the Obg domain. Positions 160 to 327 (ADAGLVGLPN…ALRKLADVVG (168 aa)) constitute an OBG-type G domain. GTP is bound by residues 166-173 (GLPNAGKS), 191-195 (FTTLH), 212-215 (DIPG), 279-282 (NKID), and 308-310 (SGA). Mg(2+)-binding residues include S173 and T193. The disordered stretch occupies residues 327 to 356 (GEQPVSSKAKNAVESAATEEPWAAPVPPQG).

This sequence belongs to the TRAFAC class OBG-HflX-like GTPase superfamily. OBG GTPase family. As to quaternary structure, monomer. Mg(2+) is required as a cofactor.

It is found in the cytoplasm. In terms of biological role, an essential GTPase which binds GTP, GDP and possibly (p)ppGpp with moderate affinity, with high nucleotide exchange rates and a fairly low GTP hydrolysis rate. Plays a role in control of the cell cycle, stress response, ribosome biogenesis and in those bacteria that undergo differentiation, in morphogenesis control. This Bradyrhizobium sp. (strain ORS 278) protein is GTPase Obg.